Reading from the N-terminus, the 346-residue chain is Tetraacyldisaccharide 4'-kinase (346 aa).

54–61 (TVGGAGKT) serves as a coordination point for ATP.

Belongs to the LpxK family.

The enzyme catalyses a lipid A disaccharide + ATP = a lipid IVA + ADP + H(+). It functions in the pathway glycolipid biosynthesis; lipid IV(A) biosynthesis; lipid IV(A) from (3R)-3-hydroxytetradecanoyl-[acyl-carrier-protein] and UDP-N-acetyl-alpha-D-glucosamine: step 6/6. Transfers the gamma-phosphate of ATP to the 4'-position of a tetraacyldisaccharide 1-phosphate intermediate (termed DS-1-P) to form tetraacyldisaccharide 1,4'-bis-phosphate (lipid IVA). The protein is Tetraacyldisaccharide 4'-kinase of Rhizobium meliloti (strain 1021) (Ensifer meliloti).